Here is a 799-residue protein sequence, read N- to C-terminus: MANILKKIYDNDRRELKKFEKLATKVESLADEYEKLSDEQLQAKTPEFRKRLEKGETLDDLLPEAFATAREGAKRVLGLYPFRVQIIGGIALHYGNIAEMMTGEGKTLTATLPVYLNALTGKGVHVVTVNEYLSSRDESEMGQLYKWLGLTVGLNLNSMSADEKRDAYNCDVTYSTNSELGFDYLRDNMVVYKDQMVQRPLNYAIIDEVDSILIDEARTPLIISGQAEQANSEYIRADRFVKTLTEDKSDDDADDDEDHGDYKIDWPTKTINLTNQGIKKACEHFGLKNLYDIDNQVLVHHIDQALRANYIMLKDIDYVVQNGEVMIVDSFTGRVMEGRRYSDGLHQAIEAKEGVKIQEESKTQATITYQNFFRMYKKLAGMTGTAKTEEEEFREIYNMEVITIPTNRPIARKDLPDILYPTLDSKFEAVVKEIKERHAKGQPVLVGTVAIESSERLSKMLDQAGIPHAVLNAKNHAKEAEIIMNAGQRGAVTIATNMAGRGTDIKLGPGVKELGGLAVIGTERHESRRIDNQLRGRSGRQGDPGVTRFYLSLEDDLMKRFGGDRVKLFLDRISDNDDDKVIESRMITKQVESAQKRVEGNNYDTRKQTLQYDDVMRTQREIIYGERMQVISEEKTLKPVLMPMIKRTIDHQVDMYTQGDKKDWRNDQLRDFISSAITDEETTKKLNIKHLGAEELKKRLYKIAEDNYAEKEKQLADPEQMLEFEKVVILRVVDERWTDHIDAMDQLRQSISLRGYGQLNPLVEYQEAGYRMFEEMISDIEFDATRLFMKAQIRQNISR.

ATP-binding positions include Q85, 103–107 (GEGKT), and D504.

This sequence belongs to the SecA family. In terms of assembly, monomer and homodimer. Part of the essential Sec protein translocation apparatus which comprises SecA, SecYEG and auxiliary proteins SecDF. Other proteins may also be involved.

The protein resides in the cell membrane. The protein localises to the cytoplasm. It catalyses the reaction ATP + H2O + cellular proteinSide 1 = ADP + phosphate + cellular proteinSide 2.. In terms of biological role, part of the Sec protein translocase complex. Interacts with the SecYEG preprotein conducting channel. Has a central role in coupling the hydrolysis of ATP to the transfer of proteins into and across the cell membrane, serving as an ATP-driven molecular motor driving the stepwise translocation of polypeptide chains across the membrane. The sequence is that of Protein translocase subunit SecA from Lactobacillus gasseri (strain ATCC 33323 / DSM 20243 / BCRC 14619 / CIP 102991 / JCM 1131 / KCTC 3163 / NCIMB 11718 / NCTC 13722 / AM63).